Here is a 330-residue protein sequence, read N- to C-terminus: Anthranilate phosphoribosyltransferase (330 aa).

Residues glycine 75, 78–79 (GD), threonine 83, 85–88 (NVST), 103–111 (KHGNRAASS), and alanine 115 each bind 5-phospho-alpha-D-ribose 1-diphosphate. An anthranilate-binding site is contributed by glycine 75. Serine 87 is a Mg(2+) binding site. Position 106 (asparagine 106) interacts with anthranilate. Arginine 161 lines the anthranilate pocket. Positions 220 and 221 each coordinate Mg(2+).

The protein belongs to the anthranilate phosphoribosyltransferase family. As to quaternary structure, homodimer. It depends on Mg(2+) as a cofactor.

The enzyme catalyses N-(5-phospho-beta-D-ribosyl)anthranilate + diphosphate = 5-phospho-alpha-D-ribose 1-diphosphate + anthranilate. Its pathway is amino-acid biosynthesis; L-tryptophan biosynthesis; L-tryptophan from chorismate: step 2/5. In terms of biological role, catalyzes the transfer of the phosphoribosyl group of 5-phosphorylribose-1-pyrophosphate (PRPP) to anthranilate to yield N-(5'-phosphoribosyl)-anthranilate (PRA). The protein is Anthranilate phosphoribosyltransferase of Erythrobacter litoralis (strain HTCC2594).